The primary structure comprises 404 residues: G-protein coupled receptor 143 (404 aa).

Residues 1–28 lie on the Extracellular side of the membrane; sequence MASPRLGTFCCPTRDAATQLVLSFQPRA. Residues 29 to 49 form a helical membrane-spanning segment; it reads FHALCLGSGGLRLALGLLQLL. Over 50 to 78 the chain is Cytoplasmic; the sequence is PGRRPAGPGSPATSPPASVRILRAAAACD. The chain crosses the membrane as a helical span at residues 79–99; it reads LLGCLGMVIRSTVWLGFPNFV. The Extracellular portion of the chain corresponds to 100–124; it reads DSVSDMNHTEIWPAAFCVGSAMWIQ. N-linked (GlcNAc...) asparagine glycosylation is present at asparagine 106. Residues 125–145 traverse the membrane as a helical segment; sequence LLYSACFWWLFCYAVDAYLVI. The Cytoplasmic segment spans residues 146–149; that stretch reads RRSA. Residues 150-170 traverse the membrane as a helical segment; it reads GLSTILLYHIMAWGLATLLCV. Topologically, residues 171–191 are extracellular; sequence EGAAMLYYPSVSRCERGLDHA. The chain crosses the membrane as a helical span at residues 192 to 212; the sequence is IPHYVTMYLPLLLVLVANPIL. Residues 213-248 are Cytoplasmic-facing; the sequence is FQKTVTAVASLLKGRQGIYTENERRMGAVIKIRFFK. A necessary for its G protein-activation ability and normal distribution of melanosomes region spans residues 221–238; the sequence is ASLLKGRQGIYTENERRM. A lysosomal/melanosomal membrane localization signal motif is present at residues 222–231; it reads SLLKGRQGIY. A helical transmembrane segment spans residues 249-269; the sequence is IMLVLIICWLSNIINESLLFY. The Extracellular segment spans residues 270–292; sequence LEMQTDINGGSLKPVRTAAKTTW. The helical transmembrane segment at 293-313 threads the bilayer; the sequence is FIMGILNPAQGFLLSLAFYGW. Residues 314–404 lie on the Cytoplasmic side of the membrane; that stretch reads TGCSLGFQSP…DPALPTHGDL (91 aa). A lysosomal/melanosomal membrane localization signal motif is present at residues 329–330; the sequence is WE. The disordered stretch occupies residues 338–404; sequence EGAHPSPLMP…DPALPTHGDL (67 aa). The segment covering 355-366 has biased composition (polar residues); that stretch reads KVSQVGGQTSDE.

The protein belongs to the G-protein coupled receptor OA family. As to quaternary structure, interacts with heterotrimeric G(i) proteins. Interacts with ARRB1 and ARRB2. Interacts with MLANA. In terms of processing, glycosylated. Phosphorylated. As to expression, expressed at high levels in the retina, including the retinal pigment epithelium (RPE), and in melanocytes. Weak expression is observed in brain and adrenal gland.

It is found in the melanosome membrane. Its subcellular location is the lysosome membrane. The protein localises to the apical cell membrane. Its function is as follows. Receptor for tyrosine, L-DOPA and dopamine. After binding to L-DOPA, stimulates Ca(2+) influx into the cytoplasm, increases secretion of the neurotrophic factor SERPINF1 and relocalizes beta arrestin at the plasma membrane; this ligand-dependent signaling occurs through a G(q)-mediated pathway in melanocytic cells. Its activity is mediated by G proteins which activate the phosphoinositide signaling pathway. Also plays a role as an intracellular G protein-coupled receptor involved in melanosome biogenesis, organization and transport. In Homo sapiens (Human), this protein is G-protein coupled receptor 143 (GPR143).